The primary structure comprises 312 residues: Putative movement protein (312 aa).

The disordered stretch occupies residues 266 to 293 (RNHLSLQPPPLRVARKDSEESSSTSVPE). Residues 278 to 307 (VARKDSEESSSTSVPEIENLTKQVKDISSY) adopt a coiled-coil conformation.

This sequence belongs to the caulimoviridae movement protein family. Homotrimer, through the coiled-coil domain. Interacts with VAP.

It localises to the host cell junction. Its subcellular location is the host plasmodesma. Transports viral genome to neighboring plant cells directly through plasmosdesmata, without any budding. The movement protein allows efficient cell to cell propagation, by bypassing the host cell wall barrier. Acts by forming tubules structures that increase the size exclusion limit (SEL) of plasmodesmata, thereby allowing viral ribonucleocapsids to spread directly to neighboring cells. The protein is Putative movement protein of Cestrum parqui (CmYLCV).